The primary structure comprises 523 residues: Leucine-rich repeat-containing protein 27 (523 aa).

The interval 1 to 26 is disordered; the sequence is MEDTSPQAVAEKAAKDPKAAKDLKDD. Positions 12 to 26 are enriched in basic and acidic residues; the sequence is KAAKDPKAAKDLKDD. LRR repeat units lie at residues 55 to 76, 77 to 98, 101 to 122, 124 to 145, and 147 to 168; these read SSPVLDLSQRGLRHLGKFFKIP, NLQQLHLQRNLLREIPEDFFQL, NLTWLDLRYNKIKVLPSGIGSH, HLKTLLLERNPIKMLPVELGQV, and TLTALNLRHCPLEFPPRLIVQK. Disordered regions lie at residues 206–236 and 372–394; these read QYPVLPLPRKGSPSENSLNDPDQEKEKADFF and REQTQHMRTRRELSKLQPPHSNM. Composition is skewed to basic and acidic residues over residues 227–236 and 372–385; these read DQEKEKADFF and REQTQHMRTRRELS. 2 coiled-coil regions span residues 335–374 and 463–494; these read VHANRMEDTHKAALQELQEKETVLEQRRRDKRALQEWREQ and MQDIKTANQDLETTKKLQEELRKLKVEMTLNK. The segment at 503–523 is disordered; that stretch reads GNLSLHPPASQPQNIFFNTKS. The span at 513–523 shows a compositional bias: polar residues; the sequence is QPQNIFFNTKS.

The polypeptide is Leucine-rich repeat-containing protein 27 (Lrrc27) (Mus musculus (Mouse)).